We begin with the raw amino-acid sequence, 140 residues long: Large ribosomal subunit protein uL16 (140 aa).

It belongs to the universal ribosomal protein uL16 family. Part of the 50S ribosomal subunit.

Functionally, binds 23S rRNA and is also seen to make contacts with the A and possibly P site tRNAs. This chain is Large ribosomal subunit protein uL16, found in Cytophaga hutchinsonii (strain ATCC 33406 / DSM 1761 / CIP 103989 / NBRC 15051 / NCIMB 9469 / D465).